A 193-amino-acid polypeptide reads, in one-letter code: CASP-like protein 1F3 (193 aa).

Positions 1–25 (MASPQNTSQKRFFQANSPGGMPTAS) are disordered. At 1 to 35 (MASPQNTSQKRFFQANSPGGMPTASQSQRSRILAQ) the chain is on the cytoplasmic side. Residues 36–56 (ITLRFLAIAFTVTAIPVMITA) form a helical membrane-spanning segment. Topologically, residues 57–78 (KEPVSLLGLAITPSYKQSSAMK) are extracellular. A helical transmembrane segment spans residues 79 to 99 (FLLGVNATVFAFTALSMLFVW). The Cytoplasmic segment spans residues 100-118 (PLRRSGSKPINYFFLHLHD). Residues 119–139 (MVMTLLLISGCAAATAVGYLS) traverse the membrane as a helical segment. Over 140 to 161 (QYGQPETYWSPICDIVKKFCHQ) the chain is Extracellular. A helical transmembrane segment spans residues 162–182 (MLISTVLSYLAFFCYLALNIL). The Cytoplasmic segment spans residues 183–193 (SVHKLMSRATE).

This sequence belongs to the Casparian strip membrane proteins (CASP) family. Homodimer and heterodimers.

It is found in the cell membrane. The protein is CASP-like protein 1F3 of Populus trichocarpa (Western balsam poplar).